The sequence spans 317 residues: L-lactate dehydrogenase (317 aa).

NAD(+) contacts are provided by residues Val17, Asp38, Lys43, Tyr68, and 82–83; that span reads GV. Arg91 contacts substrate. NAD(+) is bound by residues Ser104, 121–123, and Ser146; that span reads VSN. Position 123-126 (123-126) interacts with substrate; that stretch reads NPVD. Position 151–154 (151–154) interacts with substrate; it reads DTSR. Lys156 and His171 together coordinate beta-D-fructose 1,6-bisphosphate. The active-site Proton acceptor is His178. Tyr224 carries the phosphotyrosine modification. Substrate is bound at residue Thr233.

It belongs to the LDH/MDH superfamily. LDH family. Homotetramer.

The protein resides in the cytoplasm. It carries out the reaction (S)-lactate + NAD(+) = pyruvate + NADH + H(+). It participates in fermentation; pyruvate fermentation to lactate; (S)-lactate from pyruvate: step 1/1. With respect to regulation, allosterically activated by fructose 1,6-bisphosphate (FBP). Its function is as follows. Catalyzes the conversion of lactate to pyruvate. The polypeptide is L-lactate dehydrogenase (Clostridium perfringens (strain SM101 / Type A)).